Reading from the N-terminus, the 817-residue chain is Alpha-bisabolene synthase (817 aa).

The Mg(2+) site is built by Asp-566, Asp-570, Asp-713, Thr-717, and Glu-721. The DDXXD motif motif lies at 566-570 (DDMYD).

This sequence belongs to the terpene synthase family. Tpsd subfamily. Mg(2+) serves as cofactor. Mn(2+) is required as a cofactor. The cofactor is K(+).

It localises to the cytoplasm. The catalysed reaction is (2E,6E)-farnesyl diphosphate = (E,R)-alpha-bisabolene + diphosphate. It participates in terpene metabolism; oleoresin biosynthesis. In terms of biological role, converts farnesyl diphosphate to alpha-bisabolene. Involved in defensive oleoresin formation in conifers in response to insect attack or other injury. Involved in sesquiterpene (C15) olefins biosynthesis. In Abies grandis (Grand fir), this protein is Alpha-bisabolene synthase (ag1).